A 143-amino-acid polypeptide reads, in one-letter code: MARPDMGGPKSSGGFGGPRSGGGFGGGGYGGGGGGGGGYGGGGGGGFGGRGGDRGDRGDRDDRGGEEGGRRGFGRRKVCRFCADKTLKVDYKDQSQMKYFLTERGKIIPRRISGNCAKHQREVATAVKRGRMLAILPYTVGGM.

Residues 1–72 (MARPDMGGPK…RGGEEGGRRG (72 aa)) are disordered. Residues 10–50 (KSSGGFGGPRSGGGFGGGGYGGGGGGGGGYGGGGGGGFGGR) show a composition bias toward gly residues. A compositionally biased stretch (basic and acidic residues) spans 51–70 (GGDRGDRGDRDDRGGEEGGR).

The protein belongs to the bacterial ribosomal protein bS18 family. In terms of assembly, part of the 30S ribosomal subunit. Forms a tight heterodimer with protein bS6.

Its function is as follows. Binds as a heterodimer with protein bS6 to the central domain of the 16S rRNA, where it helps stabilize the platform of the 30S subunit. The protein is Small ribosomal subunit protein bS18 of Anaeromyxobacter sp. (strain Fw109-5).